The chain runs to 75 residues: ATP synthase subunit c (75 aa).

The next 2 membrane-spanning stretches (helical) occupy residues 13 to 33 and 55 to 75; these read LSVI…GILF and FIGL…ALII.

Belongs to the ATPase C chain family. In terms of assembly, F-type ATPases have 2 components, F(1) - the catalytic core - and F(0) - the membrane proton channel. F(1) has five subunits: alpha(3), beta(3), gamma(1), delta(1), epsilon(1). F(0) has three main subunits: a(1), b(2) and c(10-14). The alpha and beta chains form an alternating ring which encloses part of the gamma chain. F(1) is attached to F(0) by a central stalk formed by the gamma and epsilon chains, while a peripheral stalk is formed by the delta and b chains.

It is found in the cell membrane. F(1)F(0) ATP synthase produces ATP from ADP in the presence of a proton or sodium gradient. F-type ATPases consist of two structural domains, F(1) containing the extramembraneous catalytic core and F(0) containing the membrane proton channel, linked together by a central stalk and a peripheral stalk. During catalysis, ATP synthesis in the catalytic domain of F(1) is coupled via a rotary mechanism of the central stalk subunits to proton translocation. Its function is as follows. Key component of the F(0) channel; it plays a direct role in translocation across the membrane. A homomeric c-ring of between 10-14 subunits forms the central stalk rotor element with the F(1) delta and epsilon subunits. This chain is ATP synthase subunit c, found in Bifidobacterium longum (strain DJO10A).